The primary structure comprises 547 residues: CTP synthase (547 aa).

The tract at residues 1–265 is amidoligase domain; that stretch reads MARYVFITGG…DQAVLDAFGI (265 aa). Position 13 (S13) interacts with CTP. A UTP-binding site is contributed by S13. Residues 14–19 and D71 contribute to the ATP site; that span reads SLGKGL. Residues D71 and E139 each contribute to the Mg(2+) site. CTP contacts are provided by residues 146 to 148, 186 to 191, and K222; these read DIE and KTKPTQ. Residues 186–191 and K222 contribute to the UTP site; that span reads KTKPTQ. Residues 291-546 enclose the Glutamine amidotransferase type-1 domain; it reads RVAIVGKYTQ…VRAAVEVSRL (256 aa). Residue G353 coordinates L-glutamine. C380 serves as the catalytic Nucleophile; for glutamine hydrolysis. L-glutamine is bound by residues 381-384, E404, and R474; that span reads LGMQ. Residues H519 and E521 contribute to the active site.

Belongs to the CTP synthase family. Homotetramer.

The catalysed reaction is UTP + L-glutamine + ATP + H2O = CTP + L-glutamate + ADP + phosphate + 2 H(+). The enzyme catalyses L-glutamine + H2O = L-glutamate + NH4(+). It catalyses the reaction UTP + NH4(+) + ATP = CTP + ADP + phosphate + 2 H(+). Its pathway is pyrimidine metabolism; CTP biosynthesis via de novo pathway; CTP from UDP: step 2/2. Allosterically activated by GTP, when glutamine is the substrate; GTP has no effect on the reaction when ammonia is the substrate. The allosteric effector GTP functions by stabilizing the protein conformation that binds the tetrahedral intermediate(s) formed during glutamine hydrolysis. Inhibited by the product CTP, via allosteric rather than competitive inhibition. Functionally, catalyzes the ATP-dependent amination of UTP to CTP with either L-glutamine or ammonia as the source of nitrogen. Regulates intracellular CTP levels through interactions with the four ribonucleotide triphosphates. This Cereibacter sphaeroides (strain ATCC 17023 / DSM 158 / JCM 6121 / CCUG 31486 / LMG 2827 / NBRC 12203 / NCIMB 8253 / ATH 2.4.1.) (Rhodobacter sphaeroides) protein is CTP synthase.